The chain runs to 261 residues: [LysW]-aminoadipate/[LysW]-glutamate kinase (261 aa).

Residues 35-36, R62, and N166 each bind substrate; that span reads GG.

The protein belongs to the acetylglutamate kinase family. LysZ subfamily.

It is found in the cytoplasm. It catalyses the reaction [amino-group carrier protein]-C-terminal-N-(1,4-dicarboxybutan-1-yl)-L-glutamine + ATP = [amino-group carrier protein]-C-terminal-N-(1-carboxy-5-phosphooxy-5-oxopentan-1-yl)-L-glutamine + ADP. The enzyme catalyses [amino-group carrier protein]-C-terminal-gamma-(L-glutamyl)-L-glutamate + ATP = [amino-group carrier protein]-C-terminal-gamma-(5-phospho-L-glutamyl)-L-glutamate + ADP. The protein operates within amino-acid biosynthesis; L-lysine biosynthesis via AAA pathway; L-lysine from L-alpha-aminoadipate (Thermus route): step 2/5. Its pathway is amino-acid biosynthesis; L-arginine biosynthesis. Involved in both the arginine and lysine biosynthetic pathways. Phosphorylates the LysW-bound precursors glutamate (for arginine biosynthesis), respectively alpha-aminoadipate (for lysine biosynthesis). This chain is [LysW]-aminoadipate/[LysW]-glutamate kinase, found in Sulfurisphaera tokodaii (strain DSM 16993 / JCM 10545 / NBRC 100140 / 7) (Sulfolobus tokodaii).